We begin with the raw amino-acid sequence, 68 residues long: Tabimmunregulin 12 (68 aa).

Positions 1-24 (MLFKSYVYFLAGLLLVGLFTSCDA) are cleaved as a signal peptide. Residues 25–38 (DAQYEELVPGFFRK) constitute a propeptide that is removed on maturation.

In terms of tissue distribution, expressed in salivary glands.

The protein localises to the secreted. Functionally, horsefly salivary gland immunosuppressant protein that likely inhibits the host inflammatory response by regulation of anti- and pro-inflammatory cytokines. When tested on mouse splenocytes in the presence of LPS, it increases the secretion of the proinflammatory cytokine interleukin-10 (IL10) and decreases the secretion of the proinflammatory cytokine interferon-gamma (IFNG) in a dose-dependent manner. This Tabanus yao (Horsefly) protein is Tabimmunregulin 12.